Reading from the N-terminus, the 1140-residue chain is Condensin-2 complex subunit G2 (1140 aa).

Residues Leu460–Lys493 form an HEAT repeat.

Component of the condensin-2 complex, which contains the smc2 and smc4 heterodimer, and three non SMC subunits that probably regulate the complex: ncaph2, ncapd3 and ncapg2.

The protein resides in the nucleus. Its function is as follows. Regulatory subunit of the condensin-2 complex, a complex which establishes mitotic chromosome architecture and is involved in physical rigidity of the chromatid axis. Plays a role in the embryonic development of the head and kidney structures. The chain is Condensin-2 complex subunit G2 from Danio rerio (Zebrafish).